A 102-amino-acid polypeptide reads, in one-letter code: Small ribosomal subunit protein uS10 (102 aa).

Belongs to the universal ribosomal protein uS10 family. In terms of assembly, part of the 30S ribosomal subunit.

Functionally, involved in the binding of tRNA to the ribosomes. In Mycoplasma mycoides subsp. mycoides SC (strain CCUG 32753 / NCTC 10114 / PG1), this protein is Small ribosomal subunit protein uS10.